Consider the following 588-residue polypeptide: Cation channel sperm-associated protein 2 (588 aa).

The Cytoplasmic portion of the chain corresponds to 1–106 (MAQEQGHFQL…LWAGWVLDSS (106 aa)). Residues 107-129 (VFSKFIISLIFLNTFVLMVEIEL) form a helical membrane-spanning segment. At 130-138 (MESTNTALW) the chain is on the extracellular side. The chain crosses the membrane as a helical span at residues 139-164 (PVKLALEVADWFILLSFIVEILLMWL). At 165–173 (ASFSLFWKD) the chain is on the cytoplasmic side. Residues 174-198 (AWNVFDFFVTLLSLLPELVVLLGVP) form a helical membrane-spanning segment. Over 199–201 (AHS) the chain is Extracellular. A helical transmembrane segment spans residues 202–220 (VWLQLLRVCRVLRSLKLFA). Residues 221–237 (RFRQIKVILLALVRALK) lie on the Cytoplasmic side of the membrane. A helical transmembrane segment spans residues 238 to 260 (SMTFLLMLLLIFFYIFAVTGVYF). Topologically, residues 261–279 (FREYSRSTIEGLEYNMFFS) are extracellular. Positions 280–292 (DLLNSLVTVFILF) form an intramembrane region, helical; Pore-forming. At 293–312 (TLDHWYAVLQDIWKVPESSR) the chain is on the extracellular side. Residues 313 to 339 (VFSSIYVILWLLLGSIIFRNIIVAMMV) form a helical membrane-spanning segment. Topologically, residues 340 to 588 (TNFQNIRSEL…VQALMSFEDK (249 aa)) are cytoplasmic. The tract at residues 376–512 (SESLRGTSLG…YPVSHSISSH (137 aa)) is disordered. A compositionally biased stretch (acidic residues) spans 390 to 439 (DIIETSDASDDDDDDDDDDDDDDDDDDDKSDATESDNEESDSENSESENS). Positions 440-502 (ESEKIDPEKD…KVKEESKEKA (63 aa)) are enriched in basic and acidic residues.

Belongs to the cation channel sperm-associated (TC 1.A.1.19) family. Component of the CatSper complex or CatSpermasome composed of the core pore-forming members CATSPER1, CATSPER2, CATSPER3 and CATSPER4 as well as auxiliary members CATSPERB, CATSPERG2, CATSPERD, CATSPERE, CATSPERZ, C2CD6/CATSPERT, SLCO6C1, TMEM249, TMEM262 and EFCAB9. HSPA1 may be an additional auxiliary complex member. The core complex members CATSPER1, CATSPER2, CATSPER3 and CATSPER4 form a heterotetrameric channel. The auxiliary CATSPERB, CATSPERG2, CATSPERD and CATSPERE subunits form a pavilion-like structure over the pore which stabilizes the complex through interactions with CATSPER4, CATSPER3, CATSPER1 and CATSPER2 respectively. SLCO6C1 interacts with CATSPERE and TMEM262/CATSPERH interacts with CATSPERB, further stabilizing the complex. C2CD6/CATSPERT interacts at least with CATSPERD and is required for targeting the CatSper complex in the flagellar membrane. Interacts with Ca(v)3.3/CACNA1I, leading to suppression of T-type calcium channel activity. As to expression, testis-specific.

The protein resides in the cell projection. The protein localises to the cilium. It is found in the flagellum membrane. It carries out the reaction Ca(2+)(in) = Ca(2+)(out). Its activity is regulated as follows. In contrast to the human ortholog, not activated by progesterone. Activated by intracellular alkalinization. Pore-forming subunit of the CatSper complex, a sperm-specific voltage-gated calcium channel that plays a central role in sperm cell hyperactivation. Controls calcium entry to mediate the hyperactivated motility, a step needed for sperm motility which is essential late in the preparation of sperm for fertilization. This chain is Cation channel sperm-associated protein 2 (Catsper2), found in Mus musculus (Mouse).